The primary structure comprises 149 residues: Urease accessory protein UreE (149 aa).

Belongs to the UreE family.

The protein resides in the cytoplasm. Its function is as follows. Involved in urease metallocenter assembly. Binds nickel. Probably functions as a nickel donor during metallocenter assembly. The sequence is that of Urease accessory protein UreE from Prochlorococcus marinus (strain MIT 9312).